The following is a 70-amino-acid chain: MYSKILLYRSNVLFMNFFSVFVCTIGTLFLVFADVYVLASAFFQSKKEKETKFKHLHYQKRSCFFLANIH.

The chain crosses the membrane as a helical span at residues 12 to 32 (VLFMNFFSVFVCTIGTLFLVF).

The protein localises to the membrane. This is an uncharacterized protein from Saccharomyces cerevisiae (strain ATCC 204508 / S288c) (Baker's yeast).